We begin with the raw amino-acid sequence, 320 residues long: L-lactate dehydrogenase (320 aa).

Residues Phe15–Val16, Asp37, Lys42, Tyr68, and Gly82–Ala83 contribute to the NAD(+) site. Substrate contacts are provided by residues Gln85, Arg91, and Asn123–Asp126. NAD(+)-binding positions include Ala121 to Asn123 and Ser146. Asp151–Arg154 serves as a coordination point for substrate. Residues Arg156 and Gln168–Ala172 contribute to the beta-D-fructose 1,6-bisphosphate site. His178 functions as the Proton acceptor in the catalytic mechanism. At Tyr223 the chain carries Phosphotyrosine. Thr232 provides a ligand contact to substrate.

Belongs to the LDH/MDH superfamily. LDH family. In terms of assembly, homotetramer.

The protein localises to the cytoplasm. The enzyme catalyses (S)-lactate + NAD(+) = pyruvate + NADH + H(+). The protein operates within fermentation; pyruvate fermentation to lactate; (S)-lactate from pyruvate: step 1/1. With respect to regulation, allosterically activated by fructose 1,6-bisphosphate (FBP). In terms of biological role, catalyzes the conversion of lactate to pyruvate. The sequence is that of L-lactate dehydrogenase from Bacillus subtilis (strain 168).